A 280-amino-acid chain; its full sequence is 2-dehydro-3-deoxyphosphooctonate aldolase (280 aa).

The protein belongs to the KdsA family.

The protein resides in the cytoplasm. It catalyses the reaction D-arabinose 5-phosphate + phosphoenolpyruvate + H2O = 3-deoxy-alpha-D-manno-2-octulosonate-8-phosphate + phosphate. It participates in carbohydrate biosynthesis; 3-deoxy-D-manno-octulosonate biosynthesis; 3-deoxy-D-manno-octulosonate from D-ribulose 5-phosphate: step 2/3. Its pathway is bacterial outer membrane biogenesis; lipopolysaccharide biosynthesis. The chain is 2-dehydro-3-deoxyphosphooctonate aldolase from Colwellia psychrerythraea (strain 34H / ATCC BAA-681) (Vibrio psychroerythus).